The sequence spans 505 residues: ATP synthase subunit alpha (505 aa).

Residue G170–S177 coordinates ATP.

The protein belongs to the ATPase alpha/beta chains family. In terms of assembly, F-type ATPases have 2 components, CF(1) - the catalytic core - and CF(0) - the membrane proton channel. CF(1) has five subunits: alpha(3), beta(3), gamma(1), delta(1), epsilon(1). CF(0) has four main subunits: a(1), b(1), b'(1) and c(9-12).

Its subcellular location is the cellular thylakoid membrane. The enzyme catalyses ATP + H2O + 4 H(+)(in) = ADP + phosphate + 5 H(+)(out). Produces ATP from ADP in the presence of a proton gradient across the membrane. The alpha chain is a regulatory subunit. This chain is ATP synthase subunit alpha, found in Prochlorococcus marinus (strain MIT 9312).